The sequence spans 307 residues: 2-phospho-L-lactate transferase (307 aa).

7,8-didemethyl-8-hydroxy-5-deazariboflavin-binding residues include Asp48 and Lys87.

It belongs to the CofD family. As to quaternary structure, homodimer. The cofactor is Mg(2+).

The catalysed reaction is (2S)-lactyl-2-diphospho-5'-guanosine + 7,8-didemethyl-8-hydroxy-5-deazariboflavin = oxidized coenzyme F420-0 + GMP + H(+). Its pathway is cofactor biosynthesis; coenzyme F420 biosynthesis. Functionally, catalyzes the transfer of the 2-phospholactate moiety from (2S)-lactyl-2-diphospho-5'-guanosine to 7,8-didemethyl-8-hydroxy-5-deazariboflavin (FO) with the formation of oxidized coenzyme F420-0 and GMP. This chain is 2-phospho-L-lactate transferase, found in Methanosarcina acetivorans (strain ATCC 35395 / DSM 2834 / JCM 12185 / C2A).